The primary structure comprises 123 residues: Ferredoxin-5 (123 aa).

A 2Fe-2S ferredoxin-type domain is found at 2 to 119 (PNITFTSPIM…DVMVHFTGTP (118 aa)). [2Fe-2S] cluster contacts are provided by Cys42, Cys47, Cys50, and Cys102.

Belongs to the 2Fe2S plant-type ferredoxin family. The cofactor is [2Fe-2S] cluster.

Ferredoxins are iron-sulfur proteins that transfer electrons in a wide variety of metabolic reactions. This ferredoxin probably participates in nitrogen fixation. The protein is Ferredoxin-5 (fdxD) of Rhodobacter capsulatus (Rhodopseudomonas capsulata).